We begin with the raw amino-acid sequence, 267 residues long: Nanos homolog 1 (267 aa).

Positions 40–56 (FSSWNDYLGLATLITRA) are essential for its translational repressor activity. Residues 57-94 (SDRGSPHEGPGPTAAGPTMGPPEDDEDDDGEEPEAGGR) are disordered. Over residues 78-90 (PEDDEDDDGEEPE) the composition is skewed to acidic residues. A Nanos-type zinc finger spans residues 188–242 (VCVFCRNNKEAVALYTTHILKGPDGRVLCPVLRRYTCPLCGASGDNAHTIKYCPL). Zn(2+) is bound by residues cysteine 189, cysteine 192, histidine 205, cysteine 216, cysteine 224, cysteine 227, histidine 235, and cysteine 240. Short sequence motifs (C2HC) lie at residues 189–216 (CVFC…RVLC) and 224–240 (CPLC…IKYC). Positions 243-267 (SKVPPPTVRPPPRSNRDSLPSKKLR) are disordered. Pro residues predominate over residues 244–255 (KVPPPTVRPPPR). A compositionally biased stretch (basic and acidic residues) spans 256 to 267 (SNRDSLPSKKLR).

The protein belongs to the nanos family. As to quaternary structure, interacts with PUM2, SNAPIN and CTNNB1. Interacts (via N-terminal region) with CTNND1. Interacts with DDX20 (via N-terminal region). In terms of tissue distribution, expressed in the oocyte. Transiently expressed in eight-cell embryos. At 12.5 dpc, it is re-expressed in the central nervous system and the expression continues in the adult brain, in which the hippocampal formation is the predominant region. Expressed in the seminiferous tubules of mature testis, but not in the primordial germ cells.

It localises to the cytoplasm. The protein resides in the perinuclear region. Its function is as follows. May act as a translational repressor which regulates translation of specific mRNAs by forming a complex with PUM2 that associates with the 3'-UTR of mRNA targets. Capable of interfering with the proadhesive and anti-invasive functions of E-cadherin. Up-regulates the production of MMP14 to promote tumor cell invasion. Not essential for normal development. The protein is Nanos homolog 1 (Nanos1) of Mus musculus (Mouse).